Here is a 102-residue protein sequence, read N- to C-terminus: Alpha-hemoglobin-stabilizing protein (102 aa).

The protein belongs to the AHSP family. As to quaternary structure, monomer. Forms a heterodimer with free alpha-hemoglobin. Does not bind beta-hemoglobin nor alpha(2)beta(2) hemoglobin A. In terms of tissue distribution, expressed in spleen, bone marrow, and blood, with highest levels in bone marrow.

The protein resides in the cytoplasm. Functionally, acts as a chaperone to prevent the harmful aggregation of alpha-hemoglobin during normal erythroid cell development. Specifically protects free alpha-hemoglobin from precipitation. In Mus musculus (Mouse), this protein is Alpha-hemoglobin-stabilizing protein (Ahsp).